Here is a 253-residue protein sequence, read N- to C-terminus: BRI3-binding protein (253 aa).

Transmembrane regions (helical) follow at residues 19-39 (VLLPVLLLALLLLALVAPGAQ), 131-151 (ALVLVGVVLLAYWFLSLTLGF), 164-181 (FWLVRVILFSMSCVYILH), and 190-210 (AVLPLCVVVAIYFMTGPMGYW). Residues 219–253 (SPSVEEKLEHLENQVRLLNIRLNRVLENLDRSKDK) are a coiled coil. At serine 250 the chain carries Phosphoserine.

Interacts with LETMD1. Interacts with BRI3. Interacts with BRI3; the interaction is weak. Interacts with TMEM238L.

It is found in the mitochondrion outer membrane. Functionally, involved in tumorigenesis and may function by stabilizing p53/TP53. This Mus musculus (Mouse) protein is BRI3-binding protein.